Consider the following 1105-residue polypeptide: Ran-binding protein 6 (1105 aa).

Alanine 2 carries the post-translational modification N-acetylalanine. HEAT repeat units lie at residues 219 to 257 (FKDFADLLPGILQAVNDSCYQDDDSVLESLVEIADTVPK), 361 to 399 (KVVLPMTKEHIMQMLQSPDWKCRHAGLMALSAIGEGCHQ), 402 to 440 (EPILDETVNSVLLFLQDPHPRVRAAACTTLGQMATDFAP), 444 to 483 (KKFHEIVITALLRTMENQGNQRVQSHAASALVIFIEDCPK), 866 to 905 (LPWFEQLLPLIVNLICSSRPWPDRQWGLCIFDDIIEHCSP), 908 to 946 (FKYVEYFRWPMLLNMRDNNPEVRQAAAYGLGVMAQFGGD), and 949 to 987 (RSLCSEAVPLLVKVIKCANSKTKKNVIATENCISAIGKI).

It belongs to the importin beta family.

It is found in the cytoplasm. Its subcellular location is the nucleus. Its function is as follows. May function in nuclear protein import as nuclear transport receptor. The polypeptide is Ran-binding protein 6 (Ranbp6) (Mus musculus (Mouse)).